The primary structure comprises 463 residues: Glycerol-3-phosphate acyltransferase, chloroplastic (463 aa).

Residues 1–91 (MSIFFSPSSP…AATQPSAGSD (91 aa)) constitute a chloroplast transit peptide. 2 disordered regions span residues 18–37 (NANP…TPPL) and 65–95 (AETV…HGHS). 2 stretches are compositionally biased toward low complexity: residues 24 to 37 (SPSS…TPPL) and 74 to 90 (PSPS…SAGS). The short motif at 229–234 (HQTEAD) is the HXXXXD motif element.

This sequence belongs to the GPAT/DAPAT family.

The protein localises to the plastid. It localises to the chloroplast stroma. It carries out the reaction sn-glycerol 3-phosphate + an acyl-CoA = a 1-acyl-sn-glycero-3-phosphate + CoA. The protein operates within phospholipid metabolism; CDP-diacylglycerol biosynthesis; CDP-diacylglycerol from sn-glycerol 3-phosphate: step 1/3. Its function is as follows. Esterifies acyl-group from acyl-ACP to the sn-1 position of glycerol-3-phosphate. The enzyme from chilling-resistant plants discriminates against non-fluid palmitic acid and selects oleic acid whereas the enzyme from sensitive plants accepts both fatty acids. The protein is Glycerol-3-phosphate acyltransferase, chloroplastic of Carthamus tinctorius (Safflower).